We begin with the raw amino-acid sequence, 510 residues long: 2,3-bisphosphoglycerate-independent phosphoglycerate mutase (510 aa).

Mn(2+)-binding residues include Asp-13 and Ser-63. The active-site Phosphoserine intermediate is the Ser-63. Residues His-124, 154–155 (RD), Arg-186, Arg-192, 262–265 (RADR), and Lys-334 each bind substrate. Residues Asp-401, His-405, Asp-442, His-443, and His-461 each coordinate Mn(2+).

It belongs to the BPG-independent phosphoglycerate mutase family. In terms of assembly, monomer. Requires Mn(2+) as cofactor.

The enzyme catalyses (2R)-2-phosphoglycerate = (2R)-3-phosphoglycerate. The protein operates within carbohydrate degradation; glycolysis; pyruvate from D-glyceraldehyde 3-phosphate: step 3/5. Functionally, catalyzes the interconversion of 2-phosphoglycerate and 3-phosphoglycerate. The polypeptide is 2,3-bisphosphoglycerate-independent phosphoglycerate mutase (Vibrio parahaemolyticus serotype O3:K6 (strain RIMD 2210633)).